Reading from the N-terminus, the 488-residue chain is Putative BTB/POZ domain-containing protein L674 (488 aa).

The BTB domain occupies 83-150 (NIVYFNIGGK…VKNQKCPINN (68 aa)).

It belongs to the mimivirus BTB/WD family.

This is Putative BTB/POZ domain-containing protein L674 from Acanthamoeba polyphaga (Amoeba).